The sequence spans 494 residues: Glutamyl-tRNA(Gln) amidotransferase subunit A (494 aa).

Residues Lys-78 and Ser-158 each act as charge relay system in the active site. Ser-182 acts as the Acyl-ester intermediate in catalysis.

The protein belongs to the amidase family. GatA subfamily. In terms of assembly, heterotrimer of A, B and C subunits.

It carries out the reaction L-glutamyl-tRNA(Gln) + L-glutamine + ATP + H2O = L-glutaminyl-tRNA(Gln) + L-glutamate + ADP + phosphate + H(+). Allows the formation of correctly charged Gln-tRNA(Gln) through the transamidation of misacylated Glu-tRNA(Gln) in organisms which lack glutaminyl-tRNA synthetase. The reaction takes place in the presence of glutamine and ATP through an activated gamma-phospho-Glu-tRNA(Gln). In Xanthobacter autotrophicus (strain ATCC BAA-1158 / Py2), this protein is Glutamyl-tRNA(Gln) amidotransferase subunit A.